The following is a 385-amino-acid chain: S-adenosylmethionine synthase (385 aa).

His-15 provides a ligand contact to ATP. Asp-17 serves as a coordination point for Mg(2+). Residue Glu-43 participates in K(+) binding. 2 residues coordinate L-methionine: Glu-56 and Gln-99. A flexible loop region spans residues 99–109 (QSVDIAQGVDR). ATP is bound by residues 164-166 (DAK), 230-231 (RF), Asp-239, 245-246 (RK), and Lys-266. Asp-239 contacts L-methionine. Residue Lys-270 coordinates L-methionine.

This sequence belongs to the AdoMet synthase family. Homotetramer; dimer of dimers. Mg(2+) serves as cofactor. Requires K(+) as cofactor.

The protein resides in the cytoplasm. The catalysed reaction is L-methionine + ATP + H2O = S-adenosyl-L-methionine + phosphate + diphosphate. It participates in amino-acid biosynthesis; S-adenosyl-L-methionine biosynthesis; S-adenosyl-L-methionine from L-methionine: step 1/1. In terms of biological role, catalyzes the formation of S-adenosylmethionine (AdoMet) from methionine and ATP. The overall synthetic reaction is composed of two sequential steps, AdoMet formation and the subsequent tripolyphosphate hydrolysis which occurs prior to release of AdoMet from the enzyme. This Alkalilimnicola ehrlichii (strain ATCC BAA-1101 / DSM 17681 / MLHE-1) protein is S-adenosylmethionine synthase.